Here is a 1101-residue protein sequence, read N- to C-terminus: Type II inositol polyphosphate 5-phosphatase 15 (1101 aa).

Low complexity predominate over residues 31–40 (RSAYSSSSSS). Positions 31–54 (RSAYSSSSSSGDDESQPSVDDSNK) are disordered. 6 WD repeats span residues 121-162 (LRET…GSGR), 180-219 (FGSA…GIEE), 225-263 (AHRG…GKSL), 403-432 (DDSR…MRWD), 433-481 (GNGN…GGWV), and 483-519 (HSGP…PLDN). Catalytic stretches follow at residues 749–765 (DMVI…DDIT) and 828–843 (KKRI…YRDN). Residue K907 forms a Glycyl lysine isopeptide (Lys-Gly) (interchain with G-Cter in ubiquitin) linkage.

It belongs to the inositol polyphosphate 5-phosphatase family. It depends on Mg(2+) as a cofactor. As to expression, predominantly expressed in interfascicular fibers and vascular bundles. Expressed in seedlings, stems, roots and flowers. Expressed at lower level in mature leaves.

The enzyme catalyses a 1,2-diacyl-sn-glycero-3-phospho-(1D-myo-inositol-4,5-bisphosphate) + H2O = a 1,2-diacyl-sn-glycero-3-phospho-(1D-myo-inositol 4-phosphate) + phosphate. It carries out the reaction a 1,2-diacyl-sn-glycero-3-phospho-(1D-myo-inositol-3,4,5-trisphosphate) + H2O = a 1,2-diacyl-sn-glycero-3-phospho-(1D-myo-inositol-3,4-bisphosphate) + phosphate. It catalyses the reaction 1D-myo-inositol 1,4,5-trisphosphate + H2O = 1D-myo-inositol 1,4-bisphosphate + phosphate. In terms of biological role, has phosphatase activity toward PtdIns(4,5)P2, PtdIns(3,4,5)P3 and Ins(1,4,5)P3. Has a higher substrate affinity toward PtdIns(4,5)P2. Required for secondary wall synthesis and actin organization in fiber cells. In Arabidopsis thaliana (Mouse-ear cress), this protein is Type II inositol polyphosphate 5-phosphatase 15.